We begin with the raw amino-acid sequence, 339 residues long: UDP-N-acetylglucosamine--N-acetylmuramyl-(pentapeptide) pyrophosphoryl-undecaprenol N-acetylglucosamine transferase (339 aa).

UDP-N-acetyl-alpha-D-glucosamine contacts are provided by residues 11 to 13, asparagine 127, arginine 170, serine 188, isoleucine 235, and glutamine 280; that span reads TGG.

Belongs to the glycosyltransferase 28 family. MurG subfamily.

The protein resides in the cell inner membrane. The enzyme catalyses di-trans,octa-cis-undecaprenyl diphospho-N-acetyl-alpha-D-muramoyl-L-alanyl-D-glutamyl-meso-2,6-diaminopimeloyl-D-alanyl-D-alanine + UDP-N-acetyl-alpha-D-glucosamine = di-trans,octa-cis-undecaprenyl diphospho-[N-acetyl-alpha-D-glucosaminyl-(1-&gt;4)]-N-acetyl-alpha-D-muramoyl-L-alanyl-D-glutamyl-meso-2,6-diaminopimeloyl-D-alanyl-D-alanine + UDP + H(+). It functions in the pathway cell wall biogenesis; peptidoglycan biosynthesis. Cell wall formation. Catalyzes the transfer of a GlcNAc subunit on undecaprenyl-pyrophosphoryl-MurNAc-pentapeptide (lipid intermediate I) to form undecaprenyl-pyrophosphoryl-MurNAc-(pentapeptide)GlcNAc (lipid intermediate II). The sequence is that of UDP-N-acetylglucosamine--N-acetylmuramyl-(pentapeptide) pyrophosphoryl-undecaprenol N-acetylglucosamine transferase from Thermotoga sp. (strain RQ2).